We begin with the raw amino-acid sequence, 651 residues long: Probable export ATP-binding/permease protein Pfl01_2215 (651 aa).

One can recognise an ABC transporter domain in the interval 6 to 244 (LQLTGISRSF…LSNEDAVPKS (239 aa)). An ATP-binding site is contributed by 42-49 (GASGSGKS). 5 helical membrane passes run 250–270 (LVAS…ALIS), 276–296 (LLTM…SAIG), 524–544 (LALL…IGVM), 585–605 (LGGA…SLFI), and 614–634 (LTSV…FGFV).

Belongs to the ABC transporter superfamily. Macrolide exporter (TC 3.A.1.122) family. In terms of assembly, probably part of a tripartite efflux system, which is composed of an inner membrane transporter, a periplasmic membrane fusion protein, and an outer membrane component.

It localises to the cell inner membrane. Probably part of a tripartite efflux system. This chain is Probable export ATP-binding/permease protein Pfl01_2215, found in Pseudomonas fluorescens (strain Pf0-1).